The sequence spans 260 residues: Circadian clock-controlled protein daywake (260 aa).

An N-terminal signal peptide occupies residues 1 to 25 (MQLTSASVCLLWMGLLSWVSHRIDA).

It belongs to the TO family.

Component of the circadian clock or downstream effector of clock function. Required for suppressing daytime sleep (siesta) under ambient environmental temperatures. Part of a heat avoidance mechanism that modulates daytime sleep behavior under different environmental temperatures to minimize the risk of heat exposure. Under cooler ambient temperatures, suppresses daytime sleep (siesta) and thus allows for longer periods of daytime activity. The sequence is that of Circadian clock-controlled protein daywake from Drosophila yakuba (Fruit fly).